The following is a 605-amino-acid chain: Alpha-1,3-galactosidase A (605 aa).

The N-terminal stretch at 1–20 (MKKYLHILPACFLFYAAAHA) is a signal peptide. 6 PbH1 repeats span residues 256–278 (SKNI…VSQY), 312–334 (KGKV…NVHG), 421–443 (TPEV…LVTT), 444–466 (PRKV…LIEA), 477–507 (VKDV…HPSN), and 517–547 (HQNI…LFRN).

It belongs to the glycosyl hydrolase 110 family. A subfamily.

The enzyme catalyses Hydrolysis of terminal, non-reducing branched (1-&gt;3)-alpha-D-galactosidic residues, producing free D-galactose.. It catalyses the reaction Hydrolysis of terminal, non-reducing alpha-D-galactose residues in alpha-D-galactosides, including galactose oligosaccharides, galactomannans and galactolipids.. Its function is as follows. Alpha-galactosidase that specifically removes branched alpha-1,3-linked galactose residues present in blood group B antigens. Has no activity toward linear alpha-1,3-linked galactose residues. In Bacteroides fragilis (strain ATCC 25285 / DSM 2151 / CCUG 4856 / JCM 11019 / LMG 10263 / NCTC 9343 / Onslow / VPI 2553 / EN-2), this protein is Alpha-1,3-galactosidase A (glaA).